Reading from the N-terminus, the 340-residue chain is MEPGRTQIKLDPRYTADLLEVLKTNYGIPSACFSQPPTAAQLLRALGPVELALTSILTLLALGSIAIFLEDAVYLYKNTLCPIKRRTLLWKSSAPTVVSVLCCFGLWIPRSLVLVEMTITSFYAVCFYLLMLVMVEGFGGKEAVLRTLRDTPMMVHTGPCCCCCPCCPRLLLTRKKLQLLMLGPFQYAFLKITLTLVGLFLVPDGIYDPADISEGSTALWINTFLGVSTLLALWTLGIISRQARLHLGEQNMGAKFALFQVLLILTALQPSIFSVLANGGQIACSPPYSSKTRSQVMNCHLLILETFLMTVLTRMYYRRKDHKVGYETFSSPDLDLNLKA.

The Extracellular portion of the chain corresponds to 1 to 48 (MEPGRTQIKLDPRYTADLLEVLKTNYGIPSACFSQPPTAAQLLRALGP). The chain crosses the membrane as a helical span at residues 49–69 (VELALTSILTLLALGSIAIFL). At 70–87 (EDAVYLYKNTLCPIKRRT) the chain is on the cytoplasmic side. Residues 88-108 (LLWKSSAPTVVSVLCCFGLWI) form a helical membrane-spanning segment. Over 109–118 (PRSLVLVEMT) the chain is Extracellular. Residues 119–139 (ITSFYAVCFYLLMLVMVEGFG) form a helical membrane-spanning segment. The Cytoplasmic portion of the chain corresponds to 140 to 181 (GKEAVLRTLRDTPMMVHTGPCCCCCPCCPRLLLTRKKLQLLM). Residues 182–202 (LGPFQYAFLKITLTLVGLFLV) traverse the membrane as a helical segment. Topologically, residues 203-218 (PDGIYDPADISEGSTA) are extracellular. Residues 219–239 (LWINTFLGVSTLLALWTLGII) form a helical membrane-spanning segment. Residues 240-255 (SRQARLHLGEQNMGAK) lie on the Cytoplasmic side of the membrane. The helical transmembrane segment at 256 to 276 (FALFQVLLILTALQPSIFSVL) threads the bilayer. Residues 277–294 (ANGGQIACSPPYSSKTRS) are Extracellular-facing. Residues 295 to 317 (QVMNCHLLILETFLMTVLTRMYY) form a helical membrane-spanning segment. The Cytoplasmic portion of the chain corresponds to 318–340 (RRKDHKVGYETFSSPDLDLNLKA). Phosphoserine is present on S330.

It belongs to the OST-alpha family. Interacts with SLC51B. The Ost-alpha/Ost-beta complex is a heterodimer composed of alpha (SLC51A) and beta (SLC51B) subunit. As to expression, widely expressed with a high expression in ileum. Expressed in testis, colon, liver, small intestine, kidney, ovary and adrenal gland; and at low levels in heart, lung, brain, pituitary, thyroid gland, uterus, prostate, mammary gland and fat.

The protein resides in the cell membrane. It localises to the endoplasmic reticulum membrane. It carries out the reaction taurocholate(out) = taurocholate(in). The enzyme catalyses estrone 3-sulfate(out) = estrone 3-sulfate(in). The catalysed reaction is dehydroepiandrosterone 3-sulfate(out) = dehydroepiandrosterone 3-sulfate(in). It catalyses the reaction tauroursodeoxycholate(out) = tauroursodeoxycholate(in). It carries out the reaction glycoursodeoxycholate(out) = glycoursodeoxycholate(in). The enzyme catalyses glycocholate(out) = glycocholate(in). The catalysed reaction is taurochenodeoxycholate(out) = taurochenodeoxycholate(in). It catalyses the reaction glycochenodeoxycholate(out) = glycochenodeoxycholate(in). It carries out the reaction taurodeoxycholate(out) = taurodeoxycholate(in). The enzyme catalyses glycodeoxycholate(out) = glycodeoxycholate(in). The catalysed reaction is prostaglandin E2(out) = prostaglandin E2(in). Its function is as follows. Essential component of the Ost-alpha/Ost-beta complex, a heterodimer that acts as the intestinal basolateral transporter responsible for bile acid export from enterocytes into portal blood. Efficiently transports the major species of bile acids (taurocholate). Taurine conjugates are transported more efficiently across the basolateral membrane than glycine-conjugated bile acids. Can also transport steroids such as estrone 3-sulfate and dehydroepiandrosterone 3-sulfate, therefore playing a role in the enterohepatic circulation of sterols. Able to transport eicosanoids such as prostaglandin E2. This chain is Organic solute transporter subunit alpha (SLC51A), found in Homo sapiens (Human).